The chain runs to 125 residues: Large ribosomal subunit protein bL12 (125 aa).

It belongs to the bacterial ribosomal protein bL12 family. Homodimer. Part of the ribosomal stalk of the 50S ribosomal subunit. Forms a multimeric L10(L12)X complex, where L10 forms an elongated spine to which 2 to 4 L12 dimers bind in a sequential fashion. Binds GTP-bound translation factors.

Forms part of the ribosomal stalk which helps the ribosome interact with GTP-bound translation factors. Is thus essential for accurate translation. The polypeptide is Large ribosomal subunit protein bL12 (Bradyrhizobium sp. (strain BTAi1 / ATCC BAA-1182)).